The primary structure comprises 366 residues: Chorismate synthase (366 aa).

Arg47 and Arg53 together coordinate NADP(+). FMN is bound by residues 124 to 126 (RSS), Gly286, 301 to 305 (KPTAT), and Arg327.

This sequence belongs to the chorismate synthase family. As to quaternary structure, homotetramer. The cofactor is FMNH2.

It catalyses the reaction 5-O-(1-carboxyvinyl)-3-phosphoshikimate = chorismate + phosphate. It participates in metabolic intermediate biosynthesis; chorismate biosynthesis; chorismate from D-erythrose 4-phosphate and phosphoenolpyruvate: step 7/7. Catalyzes the anti-1,4-elimination of the C-3 phosphate and the C-6 proR hydrogen from 5-enolpyruvylshikimate-3-phosphate (EPSP) to yield chorismate, which is the branch point compound that serves as the starting substrate for the three terminal pathways of aromatic amino acid biosynthesis. This reaction introduces a second double bond into the aromatic ring system. This chain is Chorismate synthase, found in Microcystis aeruginosa (strain NIES-843 / IAM M-2473).